A 279-amino-acid chain; its full sequence is Phenylalanine 3-hydroxylase (279 aa).

Residues histidine 140, histidine 145, and glutamate 186 each contribute to the Fe cation site.

The protein belongs to the biopterin-dependent aromatic amino acid hydroxylase family. Requires Fe(2+) as cofactor.

It carries out the reaction (6R)-L-erythro-5,6,7,8-tetrahydrobiopterin + L-phenylalanine + O2 = 3-hydroxy-L-phenylalanine + (4aS,6R)-4a-hydroxy-L-erythro-5,6,7,8-tetrahydrobiopterin. In vitro, catalyzes the highly regiospecific C-3 hydroxylation of L-phenylalanine (L-Phe) to yield 3-hydroxy-L-phenylalanine (meta-Tyr), an amino acid found in bacterial secondary metabolites such as sanglifehrin A and some pacidamycins. Tetrahydrobiopterin (BH4) seems to be the physiological pterin, however the hydroxylase is also able to use 6-methyltetrahydropterin (6-MePH4). This chain is Phenylalanine 3-hydroxylase, found in Streptomyces coeruleorubidus.